We begin with the raw amino-acid sequence, 202 residues long: Holliday junction branch migration complex subunit RuvA (202 aa).

The tract at residues 1 to 65 (MIGYLEGRVV…EDALELFGFA (65 aa)) is domain I. The tract at residues 66–144 (SLDDRETFRT…GRAPAAGLAP (79 aa)) is domain II. A flexible linker region spans residues 145 to 155 (SVPIPGGVAGD). Residues 155–202 (DVVAGLTNLGYPEPEARQVAAEVLEAEPDLDVAAALRQALKRLASAKK) are domain III.

This sequence belongs to the RuvA family. In terms of assembly, homotetramer. Forms an RuvA(8)-RuvB(12)-Holliday junction (HJ) complex. HJ DNA is sandwiched between 2 RuvA tetramers; dsDNA enters through RuvA and exits via RuvB. An RuvB hexamer assembles on each DNA strand where it exits the tetramer. Each RuvB hexamer is contacted by two RuvA subunits (via domain III) on 2 adjacent RuvB subunits; this complex drives branch migration. In the full resolvosome a probable DNA-RuvA(4)-RuvB(12)-RuvC(2) complex forms which resolves the HJ.

Its subcellular location is the cytoplasm. Functionally, the RuvA-RuvB-RuvC complex processes Holliday junction (HJ) DNA during genetic recombination and DNA repair, while the RuvA-RuvB complex plays an important role in the rescue of blocked DNA replication forks via replication fork reversal (RFR). RuvA specifically binds to HJ cruciform DNA, conferring on it an open structure. The RuvB hexamer acts as an ATP-dependent pump, pulling dsDNA into and through the RuvAB complex. HJ branch migration allows RuvC to scan DNA until it finds its consensus sequence, where it cleaves and resolves the cruciform DNA. This is Holliday junction branch migration complex subunit RuvA from Solidesulfovibrio magneticus (strain ATCC 700980 / DSM 13731 / RS-1) (Desulfovibrio magneticus).